Reading from the N-terminus, the 122-residue chain is Small ribosomal subunit protein uS13 (122 aa).

Residues Arg91–Lys122 are disordered.

This sequence belongs to the universal ribosomal protein uS13 family. As to quaternary structure, part of the 30S ribosomal subunit. Forms a loose heterodimer with protein S19. Forms two bridges to the 50S subunit in the 70S ribosome.

In terms of biological role, located at the top of the head of the 30S subunit, it contacts several helices of the 16S rRNA. In the 70S ribosome it contacts the 23S rRNA (bridge B1a) and protein L5 of the 50S subunit (bridge B1b), connecting the 2 subunits; these bridges are implicated in subunit movement. Contacts the tRNAs in the A and P-sites. The polypeptide is Small ribosomal subunit protein uS13 (Kocuria rhizophila (strain ATCC 9341 / DSM 348 / NBRC 103217 / DC2201)).